A 105-amino-acid chain; its full sequence is Met repressor (105 aa).

This sequence belongs to the MetJ family. In terms of assembly, homodimer.

It is found in the cytoplasm. This regulatory protein, when combined with SAM (S-adenosylmethionine) represses the expression of the methionine regulon and of enzymes involved in SAM synthesis. This Vibrio vulnificus (strain CMCP6) protein is Met repressor.